Here is a 157-residue protein sequence, read N- to C-terminus: MAALVLLRAGLARPRGVPTALLRGTLLRHSAVLTAAADRSAPARQSHGGAPQGHGSSKAASLHWTSERAVSALLLGLLPAAYLYPGPAVDYSLAAALTLHGHWGLGQVITDYVHGDTPIKVANTGLYVLSAITFTGLCYFNYYDVGICKAVAMLWSI.

The transit peptide at 1-45 directs the protein to the mitochondrion; the sequence is MAALVLLRAGLARPRGVPTALLRGTLLRHSAVLTAAADRSAPARQ. Residues 46–61 are Mitochondrial matrix-facing; the sequence is SHGGAPQGHGSSKAAS. The helical transmembrane segment at 62–83 threads the bilayer; the sequence is LHWTSERAVSALLLGLLPAAYL. Topologically, residues 84-88 are mitochondrial intermembrane; that stretch reads YPGPA. The chain crosses the membrane as a helical span at residues 89–109; it reads VDYSLAAALTLHGHWGLGQVI. Residue His100 participates in heme b binding. At 110–118 the chain is on the mitochondrial matrix side; the sequence is TDYVHGDTP. Tyr112 contacts a ubiquinone. Residues 119–140 traverse the membrane as a helical segment; that stretch reads IKVANTGLYVLSAITFTGLCYF. The Mitochondrial intermembrane segment spans residues 141–157; the sequence is NYYDVGICKAVAMLWSI.

It belongs to the CybS family. Component of complex II composed of four subunits: the flavoprotein (FP) SDHA, iron-sulfur protein (IP) SDHB, and a cytochrome b560 composed of SDHC and SDHD.

The protein localises to the mitochondrion inner membrane. Its pathway is carbohydrate metabolism; tricarboxylic acid cycle. Its function is as follows. Membrane-anchoring subunit of succinate dehydrogenase (SDH) that is involved in complex II of the mitochondrial electron transport chain and is responsible for transferring electrons from succinate to ubiquinone (coenzyme Q). SDH also oxidizes malate to the non-canonical enol form of oxaloacetate, enol-oxaloacetate. Enol-oxaloacetate, which is a potent inhibitor of the succinate dehydrogenase activity, is further isomerized into keto-oxaloacetate. This Gallus gallus (Chicken) protein is Succinate dehydrogenase [ubiquinone] cytochrome b small subunit, mitochondrial (SDHD).